The chain runs to 253 residues: Hydroxyacylglutathione hydrolase (253 aa).

The Zn(2+) site is built by H59, H61, D63, H64, H118, D143, and H181.

Belongs to the metallo-beta-lactamase superfamily. Glyoxalase II family. As to quaternary structure, monomer. The cofactor is Zn(2+).

The catalysed reaction is an S-(2-hydroxyacyl)glutathione + H2O = a 2-hydroxy carboxylate + glutathione + H(+). It functions in the pathway secondary metabolite metabolism; methylglyoxal degradation; (R)-lactate from methylglyoxal: step 2/2. Functionally, thiolesterase that catalyzes the hydrolysis of S-D-lactoyl-glutathione to form glutathione and D-lactic acid. This is Hydroxyacylglutathione hydrolase from Prochlorococcus marinus (strain SARG / CCMP1375 / SS120).